We begin with the raw amino-acid sequence, 287 residues long: Uroporphyrinogen-III C-methyltransferase (287 aa).

Polar residues predominate over residues 1–10 (MAGKTVTNGA). The tract at residues 1-24 (MAGKTVTNGAAQGKAARSGADGAV) is disordered. Residues Pro40, 116–118 (GGD), Thr146, and Met199 contribute to the S-adenosyl-L-methionine site.

Belongs to the precorrin methyltransferase family.

The enzyme catalyses uroporphyrinogen III + 2 S-adenosyl-L-methionine = precorrin-2 + 2 S-adenosyl-L-homocysteine + H(+). It participates in porphyrin-containing compound metabolism; siroheme biosynthesis; precorrin-2 from uroporphyrinogen III: step 1/1. Its function is as follows. Catalyzes the methylation of both C-2 and C-7 of uroporphyrinogen III leading to precorrin-1 and precorrin-2; their oxidative esterification gives respectively factor I octamethyl ester and sirohydrochlorin. Inactivation of uroporphyrinogen-III methyltransferase results in the loss of nitrite and nitric oxide reductase activities, but not of nitrous oxide reductase activity. Likely involved in heme D1 biosynthesis. This chain is Uroporphyrinogen-III C-methyltransferase (nirE), found in Paracoccus denitrificans (strain Pd 1222).